The chain runs to 726 residues: MAR-binding filament-like protein 1 (726 aa).

A chloroplast-targeting transit peptide spans 1–41 (MGFLIGGSCFVPSVPLHSRFLSSPSSSSSSSPSSSQFGLLC). Residues 42 to 95 (SSNVAKFKRRRPTLASLNQEDGYEYDVASAKRRAFLLVGISVLPFLQLRSPALA) constitute a thylakoid transit peptide. Topologically, residues 96–124 (DERGNEIKTSKVDLETEVAVVSEGTSPNP) are lumenal, thylakoid. Residues 125-145 (FLALLNGLGIFSAGVLGALYA) traverse the membrane as a helical segment. The stretch at 144–691 (YALARQDTKA…KGEILRMRSQ (548 aa)) forms a coiled coil. Over 146–726 (LARQDTKAAE…VRRRKSSTSS (581 aa)) the chain is Stromal. The disordered stretch occupies residues 678-726 (LGSAKGEILRMRSQPDSVKAVNSTDNKEKSDNTVTVKKVVRRRKSSTSS). Polar residues predominate over residues 691-701 (QPDSVKAVNST). The Nuclear localization signal signature appears at 715-722 (KVVRRRKS). Over residues 715–726 (KVVRRRKSSTSS) the composition is skewed to basic residues.

In terms of assembly, interacts with PTST2; the interaction is essential for the initiation of starch granules biosynthesis in leaf chloroplasts, for the correct location of the process in the stromal spaces between the thylakoid membranes, and for the association of PTST2 with the thylakoid membranes. Post-translationally, predicted to be translocated into the thylakoid by the Tat system. The position of the transit peptide cleavages have not been experimentally proven.

The protein localises to the plastid. The protein resides in the chloroplast. Its subcellular location is the chloroplast thylakoid membrane. It is found in the chloroplast stroma. It localises to the chloroplast nucleoid. The protein localises to the nucleus. The protein resides in the nucleus matrix. In terms of biological role, DNA-binding protein required for the initiation of starch granules biosynthesis in leaf chloroplasts. Anchored to the thylakoid membranes with its C-terminus facing into the stroma where it is essential for localizing PTST2 and SS4 to the stromal spaces between the thylakoid membranes in order to begin starch granule formation. Associated with leaf chloroplastic nucleoids in vivo. Binds to various chloroplastic double-stranded DNA fragments without particular sequence specificity in vitro. May function at the interface between nucleoids and thylakoids possibly by anchoring nucleoids to the thylakoid membrane system in mature chloroplasts. Likely to participate in nuclear architecture by connecting chromatin with the nuclear matrix and potentially with the nuclear envelope. The chain is MAR-binding filament-like protein 1 from Arabidopsis thaliana (Mouse-ear cress).